We begin with the raw amino-acid sequence, 361 residues long: S-adenosylmethionine:tRNA ribosyltransferase-isomerase (361 aa).

It belongs to the QueA family. In terms of assembly, monomer.

The protein localises to the cytoplasm. It catalyses the reaction 7-aminomethyl-7-carbaguanosine(34) in tRNA + S-adenosyl-L-methionine = epoxyqueuosine(34) in tRNA + adenine + L-methionine + 2 H(+). Its pathway is tRNA modification; tRNA-queuosine biosynthesis. Functionally, transfers and isomerizes the ribose moiety from AdoMet to the 7-aminomethyl group of 7-deazaguanine (preQ1-tRNA) to give epoxyqueuosine (oQ-tRNA). The chain is S-adenosylmethionine:tRNA ribosyltransferase-isomerase from Rhizobium johnstonii (strain DSM 114642 / LMG 32736 / 3841) (Rhizobium leguminosarum bv. viciae).